Consider the following 383-residue polypeptide: Outer membrane protein assembly factor BamB (383 aa).

Positions 1 to 23 (MMLLKRCNRRALVALAAVLLLAA) are cleaved as a signal peptide. Cysteine 24 carries the N-palmitoyl cysteine lipid modification. Residue cysteine 24 is the site of S-diacylglycerol cysteine attachment.

Belongs to the BamB family. In terms of assembly, part of the Bam complex.

The protein resides in the cell outer membrane. In terms of biological role, part of the outer membrane protein assembly complex, which is involved in assembly and insertion of beta-barrel proteins into the outer membrane. This is Outer membrane protein assembly factor BamB from Alkalilimnicola ehrlichii (strain ATCC BAA-1101 / DSM 17681 / MLHE-1).